The primary structure comprises 296 residues: 33 kDa chaperonin (296 aa).

Disulfide bonds link C238–C240 and C271–C274.

Belongs to the HSP33 family. In terms of processing, under oxidizing conditions two disulfide bonds are formed involving the reactive cysteines. Under reducing conditions zinc is bound to the reactive cysteines and the protein is inactive.

Its subcellular location is the cytoplasm. Functionally, redox regulated molecular chaperone. Protects both thermally unfolding and oxidatively damaged proteins from irreversible aggregation. Plays an important role in the bacterial defense system toward oxidative stress. In Clostridium botulinum (strain ATCC 19397 / Type A), this protein is 33 kDa chaperonin.